Reading from the N-terminus, the 155-residue chain is DNA gyrase inhibitor (155 aa).

The protein belongs to the DNA gyrase inhibitor family. In terms of assembly, interacts with DNA gyrase.

The protein resides in the cytoplasm. In terms of biological role, inhibits the supercoiling activity of DNA gyrase. Acts by inhibiting DNA gyrase at an early step, prior to (or at the step of) binding of DNA by the gyrase. It protects cells against toxins that target DNA gyrase, by inhibiting activity of these toxins and reducing the formation of lethal double-strand breaks in the cell. This is DNA gyrase inhibitor from Escherichia fergusonii (strain ATCC 35469 / DSM 13698 / CCUG 18766 / IAM 14443 / JCM 21226 / LMG 7866 / NBRC 102419 / NCTC 12128 / CDC 0568-73).